The chain runs to 380 residues: 3-dehydroquinate synthase (380 aa).

The protein belongs to the archaeal-type DHQ synthase family.

It catalyses the reaction 2-amino-2,3,7-trideoxy-D-lyxo-hept-6-ulosonate + NAD(+) + H2O = 3-dehydroquinate + NH4(+) + NADH + H(+). In terms of biological role, catalyzes the oxidative deamination and cyclization of 2-amino-3,7-dideoxy-D-threo-hept-6-ulosonic acid (ADH) to yield 3-dehydroquinate (DHQ), which is fed into the canonical shikimic pathway of aromatic amino acid biosynthesis. This Methanosarcina mazei (strain ATCC BAA-159 / DSM 3647 / Goe1 / Go1 / JCM 11833 / OCM 88) (Methanosarcina frisia) protein is 3-dehydroquinate synthase.